We begin with the raw amino-acid sequence, 363 residues long: NAD(P)H-quinone oxidoreductase subunit 1, chloroplastic (363 aa).

The next 6 membrane-spanning stretches (helical) occupy residues 26 to 46 (IIWVLIPIFTPVLGITIGVLV), 98 to 118 (FSIGPSIAVISILLSYLVIPF), 127 to 147 (LSIGVFLWIAISSIAPVGLLM), 253 to 273 (FGLFYVASYLNLLVSSLFVTV), 300 to 320 (VFGTIIGIFITLAKTYLFLFI), and 336 to 356 (LLNLGWKFLLPISLGNLLLTT).

It belongs to the complex I subunit 1 family. NDH is composed of at least 16 different subunits, 5 of which are encoded in the nucleus.

It is found in the plastid. Its subcellular location is the chloroplast thylakoid membrane. The enzyme catalyses a plastoquinone + NADH + (n+1) H(+)(in) = a plastoquinol + NAD(+) + n H(+)(out). It catalyses the reaction a plastoquinone + NADPH + (n+1) H(+)(in) = a plastoquinol + NADP(+) + n H(+)(out). Its function is as follows. NDH shuttles electrons from NAD(P)H:plastoquinone, via FMN and iron-sulfur (Fe-S) centers, to quinones in the photosynthetic chain and possibly in a chloroplast respiratory chain. The immediate electron acceptor for the enzyme in this species is believed to be plastoquinone. Couples the redox reaction to proton translocation, and thus conserves the redox energy in a proton gradient. The sequence is that of NAD(P)H-quinone oxidoreductase subunit 1, chloroplastic from Helianthus annuus (Common sunflower).